A 726-amino-acid chain; its full sequence is NHL repeat-containing protein 2 (726 aa).

NHL repeat units lie at residues 212–254, 265–307, 335–369, 409–439, 461–505, and 518–562; these read KLYK…VWKN, NPGR…IDLE, ISSP…IWAL, FAQP…VRTV, AFGD…VDPK, and ASNM…LDLE.

In terms of assembly, monomer.

The protein localises to the cytoplasm. The protein resides in the cytosol. In terms of biological role, required for normal embryonic development. The protein is NHL repeat-containing protein 2 (NHLRC2) of Bos taurus (Bovine).